We begin with the raw amino-acid sequence, 209 residues long: Small ribosomal subunit protein uS4 (209 aa).

An S4 RNA-binding domain is found at 98-158; the sequence is SRVDNIVYRL…EKSRSLAAIK (61 aa).

It belongs to the universal ribosomal protein uS4 family. As to quaternary structure, part of the 30S ribosomal subunit. Contacts protein S5. The interaction surface between S4 and S5 is involved in control of translational fidelity.

One of the primary rRNA binding proteins, it binds directly to 16S rRNA where it nucleates assembly of the body of the 30S subunit. Its function is as follows. With S5 and S12 plays an important role in translational accuracy. In Pseudothermotoga lettingae (strain ATCC BAA-301 / DSM 14385 / NBRC 107922 / TMO) (Thermotoga lettingae), this protein is Small ribosomal subunit protein uS4.